We begin with the raw amino-acid sequence, 425 residues long: Pectate lyase L (425 aa).

A signal peptide spans 1–25 (MKYLNCFISTGLAAFFLVNSTSVLA). A disulfide bond links cysteine 28 and cysteine 114. Aspartate 209, aspartate 233, aspartate 234, and aspartate 237 together coordinate Ca(2+). Lysine 273 serves as the catalytic Proton acceptor. The Ca(2+) site is built by asparagine 402, serine 413, alanine 416, aspartate 418, and glutamate 423.

Belongs to the polysaccharide lyase 9 family. The cofactor is Ca(2+).

Its subcellular location is the secreted. The catalysed reaction is Eliminative cleavage of (1-&gt;4)-alpha-D-galacturonan to give oligosaccharides with 4-deoxy-alpha-D-galact-4-enuronosyl groups at their non-reducing ends.. The protein operates within glycan metabolism; pectin degradation; 2-dehydro-3-deoxy-D-gluconate from pectin: step 2/5. In terms of biological role, presents an endo-cleaving activity on polygalacturonate or partially methylated pectin. Is effective in the maceration of plant tissue, and has an important role in soft-rot disease. Is 280-fold less active against polygalacturonate than the major pectate lyase PelB. When assayed on polygalacturonate, PelL releases oligogalacturonates of different sizes; upon prolonged incubation, PelL degrades the primary products to unsaturated tetramer and pentamer in addition to unsaturated dimer and trimer. When assayed on oligogalacturonates (degrees of polymerization of 2 to 8), it preferentially forms unsaturated tetramer, and displays the highest activity on the octamer. The sequence is that of Pectate lyase L (pelL) from Dickeya dadantii (strain 3937) (Erwinia chrysanthemi (strain 3937)).